The following is a 749-amino-acid chain: Homeobox-leucine zipper protein ROC7 (749 aa).

Positions 26–98 are disordered; sequence LDQHQQHQHQ…KKRYHRHTQH (73 aa). The span at 46 to 57 shows a compositional bias: basic and acidic residues; sequence SDGRAPRDELEM. The span at 68-78 shows a compositional bias: gly residues; that stretch reads SGGGGGGGGSG. The span at 86 to 97 shows a compositional bias: basic residues; sequence RPRKKRYHRHTQ. The homeobox DNA-binding region spans 88 to 147; that stretch reads RKKRYHRHTQHQIQELEAFFKECPHPDDKQRKELSRELGLEPLQVKFWFQNKRTQMKTQH. Residues 137–218 adopt a coiled-coil conformation; it reads QNKRTQMKTQ…DRISAIAAKY (82 aa). Positions 256 to 494 constitute an START domain; the sequence is ADFDKPLVIE…LERQCERLAS (239 aa).

The protein belongs to the HD-ZIP homeobox family. Class IV subfamily.

It is found in the nucleus. Its function is as follows. Probable transcription factor. This Oryza sativa subsp. indica (Rice) protein is Homeobox-leucine zipper protein ROC7 (ROC7).